The chain runs to 49 residues: Large ribosomal subunit protein bL33B (49 aa).

Belongs to the bacterial ribosomal protein bL33 family.

In Staphylococcus saprophyticus subsp. saprophyticus (strain ATCC 15305 / DSM 20229 / NCIMB 8711 / NCTC 7292 / S-41), this protein is Large ribosomal subunit protein bL33B.